Reading from the N-terminus, the 308-residue chain is uncharacterized protein (308 aa).

An S4 RNA-binding domain is found at 11-87 (KRLDSLLASL…LKLEVLFEDK (77 aa)). Residue D131 is part of the active site.

The protein belongs to the pseudouridine synthase RluA family.

It catalyses the reaction a uridine in RNA = a pseudouridine in RNA. This is an uncharacterized protein from Mycoplasma genitalium (strain ATCC 33530 / DSM 19775 / NCTC 10195 / G37) (Mycoplasmoides genitalium).